The primary structure comprises 453 residues: Allantoinase (453 aa).

His-59, His-61, Lys-146, His-186, His-242, and Asp-315 together coordinate Zn(2+). Lys-146 carries the post-translational modification N6-carboxylysine.

It belongs to the metallo-dependent hydrolases superfamily. Allantoinase family. Homotetramer. Zn(2+) is required as a cofactor. In terms of processing, carboxylation allows a single lysine to coordinate two zinc ions.

It catalyses the reaction (S)-allantoin + H2O = allantoate + H(+). It participates in nitrogen metabolism; (S)-allantoin degradation; allantoate from (S)-allantoin: step 1/1. In terms of biological role, catalyzes the conversion of allantoin (5-ureidohydantoin) to allantoic acid by hydrolytic cleavage of the five-member hydantoin ring. The sequence is that of Allantoinase from Escherichia coli (strain 55989 / EAEC).